Consider the following 421-residue polypeptide: Expansin-like protein DDB_G0293186 (421 aa).

The N-terminal stretch at 1 to 20 (MRTLKLIILLILSTFKTINS) is a signal peptide. A glycan (N-linked (GlcNAc...) asparagine) is linked at asparagine 19. The 97-residue stretch at 43–139 (GGQCGLPLPG…QKVSCGFSGY (97 aa)) folds into the Expansin-like EG45 domain. Intrachain disulfides connect cysteine 46/cysteine 70 and cysteine 73/cysteine 134. Residues asparagine 117 and asparagine 391 are each glycosylated (N-linked (GlcNAc...) asparagine).

It belongs to the expansin family. Expansin A subfamily.

The protein resides in the secreted. In terms of biological role, may serve to lubricate the movement of the cellulose microfibrils during cell growth and wall extension and/or may serve to maintain the fluid state of the slug cell wall. This is Expansin-like protein DDB_G0293186 from Dictyostelium discoideum (Social amoeba).